The chain runs to 238 residues: Ribonuclease PH (238 aa).

Residues Arg86 and 124–126 contribute to the phosphate site; that span reads GTR.

It belongs to the RNase PH family. Homohexameric ring arranged as a trimer of dimers.

The catalysed reaction is tRNA(n+1) + phosphate = tRNA(n) + a ribonucleoside 5'-diphosphate. Its function is as follows. Phosphorolytic 3'-5' exoribonuclease that plays an important role in tRNA 3'-end maturation. Removes nucleotide residues following the 3'-CCA terminus of tRNAs; can also add nucleotides to the ends of RNA molecules by using nucleoside diphosphates as substrates, but this may not be physiologically important. Probably plays a role in initiation of 16S rRNA degradation (leading to ribosome degradation) during starvation. This Rhizobium rhizogenes (strain K84 / ATCC BAA-868) (Agrobacterium radiobacter) protein is Ribonuclease PH.